Here is a 121-residue protein sequence, read N- to C-terminus: Large ribosomal subunit protein bL20 (121 aa).

This sequence belongs to the bacterial ribosomal protein bL20 family.

In terms of biological role, binds directly to 23S ribosomal RNA and is necessary for the in vitro assembly process of the 50S ribosomal subunit. It is not involved in the protein synthesizing functions of that subunit. The polypeptide is Large ribosomal subunit protein bL20 (Chlamydia caviae (strain ATCC VR-813 / DSM 19441 / 03DC25 / GPIC) (Chlamydophila caviae)).